Reading from the N-terminus, the 506-residue chain is ATP synthase subunit alpha, chloroplastic (506 aa).

170–177 (GDRQTGKT) lines the ATP pocket.

The protein belongs to the ATPase alpha/beta chains family. In terms of assembly, F-type ATPases have 2 components, CF(1) - the catalytic core - and CF(0) - the membrane proton channel. CF(1) has five subunits: alpha(3), beta(3), gamma(1), delta(1), epsilon(1). CF(0) has four main subunits: a, b, b' and c.

It is found in the plastid. It localises to the chloroplast thylakoid membrane. The enzyme catalyses ATP + H2O + 4 H(+)(in) = ADP + phosphate + 5 H(+)(out). Its function is as follows. Produces ATP from ADP in the presence of a proton gradient across the membrane. The alpha chain is a regulatory subunit. The polypeptide is ATP synthase subunit alpha, chloroplastic (Euglena gracilis).